A 195-amino-acid polypeptide reads, in one-letter code: Protein SYM1 (195 aa).

The next 4 helical transmembrane spans lie at 21 to 39 (GIMT…QVGF), 55 to 71 (AVVY…DSWY), 98 to 115 (LLFA…MSIL), and 159 to 175 (LFSV…FLSF).

This sequence belongs to the peroxisomal membrane protein PXMP2/4 family.

Its subcellular location is the mitochondrion inner membrane. Functionally, may be involved in cellular response to stress. Required to maintain mitochondrial DNA (mtDNA) integrity and stability. The sequence is that of Protein SYM1 (SYM1) from Kluyveromyces lactis (strain ATCC 8585 / CBS 2359 / DSM 70799 / NBRC 1267 / NRRL Y-1140 / WM37) (Yeast).